Consider the following 192-residue polypeptide: Peptidyl-tRNA hydrolase (192 aa).

His17 is a binding site for tRNA. The active-site Proton acceptor is the His22. Phe68, Asn70, and Asn116 together coordinate tRNA.

This sequence belongs to the PTH family. Monomer.

The protein resides in the cytoplasm. It catalyses the reaction an N-acyl-L-alpha-aminoacyl-tRNA + H2O = an N-acyl-L-amino acid + a tRNA + H(+). Its function is as follows. Hydrolyzes ribosome-free peptidyl-tRNAs (with 1 or more amino acids incorporated), which drop off the ribosome during protein synthesis, or as a result of ribosome stalling. In terms of biological role, catalyzes the release of premature peptidyl moieties from peptidyl-tRNA molecules trapped in stalled 50S ribosomal subunits, and thus maintains levels of free tRNAs and 50S ribosomes. The chain is Peptidyl-tRNA hydrolase from Stenotrophomonas maltophilia (strain R551-3).